The sequence spans 664 residues: Intraflagellar transport protein 70A2 (664 aa).

TPR repeat units lie at residues 11–44 (DGEF…SSRS), 45–78 (RAGL…HPEL), 153–186 (PDGL…SGYQ), 188–220 (DVSY…GIRQ), 395–423 (QVQE…EKYI), 424–456 (PVLM…CNDH), and 458–491 (VWKL…NYDN). Residues 507–534 (YIMTSQNEEAEELMRKIEKEEEQLSYGD) adopt a coiled-coil conformation. One copy of the TPR 8 repeat lies at 543–576 (CIVNLVIGTLYCAKGNYDFGISRVIKSLEPYHKK).

Belongs to the TTC30/dfy-1/fleer family. In terms of assembly, interacts wit the IFT B complex component IFT52.

The protein resides in the cell projection. It is found in the cilium. Required for polyglutamylation of axonemal tubulin. Plays a role in anterograde intraflagellar transport (IFT), the process by which cilia precursors are transported from the base of the cilium to the site of their incorporation at the tip. In Mus musculus (Mouse), this protein is Intraflagellar transport protein 70A2 (Ift70a2).